Reading from the N-terminus, the 502-residue chain is Neuronal acetylcholine receptor subunit alpha-7 (502 aa).

The signal sequence occupies residues 1–22 (MCGGRGGIWLALAAALLHVSLQ). The Extracellular segment spans residues 23 to 233 (GEFQRRLYKE…VTMRRRTLYY (211 aa)). Residues arginine 42 and valine 44 each contribute to the Ca(2+) site. N-linked (GlcNAc...) asparagine glycans are attached at residues asparagine 46, asparagine 90, and asparagine 133. Cysteines 150 and 164 form a disulfide. Ca(2+) is bound by residues serine 172 and tyrosine 210. The cysteines at positions 212 and 213 are disulfide-linked. A run of 3 helical transmembrane segments spans residues 234–254 (GLNL…VFLL), 262–282 (ISLG…VAEI), and 295–315 (QYFA…VIVL). Positions 260–267 (EKISLGIT) are essential for TMEM35A/NACHO-mediated proper subunit assembly and trafficking to cell membrane. The Cytoplasmic segment spans residues 316–469 (RYHHHDPDGG…WKFAACVVDR (154 aa)). A helical membrane pass occupies residues 470–490 (LCLMAFSVFTIICTIGILMSA).

This sequence belongs to the ligand-gated ion channel (TC 1.A.9) family. Acetylcholine receptor (TC 1.A.9.1) subfamily. Alpha-7/CHRNA7 sub-subfamily. Homopentamer. Can also form heteropentamers with CHRNB2, mainly found in basal forebrain cholinergic neurons. Interacts with RIC3; which is required for proper folding and assembly. Interacts with LYPD6. Interacts with CANX. Glycosylations at Asn-46, Asn-90 and Asn-133 are essential for TMEM35A/NACHO-mediated proper subunit assembly and trafficking to the cell membrane. Expressed in neurons. Expressed in umbrella cells of urothelium (at protein level).

It is found in the postsynaptic cell membrane. The protein resides in the cell membrane. The catalysed reaction is Ca(2+)(in) = Ca(2+)(out). The enzyme catalyses K(+)(in) = K(+)(out). It carries out the reaction Na(+)(in) = Na(+)(out). It catalyses the reaction choline(out) = choline(in). The catalysed reaction is NH4(+)(in) = NH4(+)(out). The enzyme catalyses L-arginine(in) = L-arginine(out). It carries out the reaction guanidine(out) = guanidine(in). With respect to regulation, activated by a myriad of ligands such as acetylcholine, cytisine, nicotine, choline and epibatidine. Oligomeric amyloid-beta protein 42 activates specifially CHRNA7:CHRNB2 nAchRs. Activity is modulated by positive allosteric modulators (PAMs), such as flavonoids, with a wide range of chemical diversity, pharmacological sensitivity and efficacy. AChR activity is inhibited by the antagonists alpha-conotoxons RgIA, ImI and ImII, small disulfide-constrained peptides from cone snails. Alpha-conotoxin PnIC selectively inhibits CHRNA7:CHRNB2 over CHRNA7 homopentamer. Component of neuronal acetylcholine receptors (nAChRs) that function as pentameric, ligand-gated cation channels with high calcium permeability among other activities. nAChRs are excitatory neurotrasnmitter receptors formed by a collection of nAChR subunits known to mediate synaptic transmission in the nervous system and the neuromuscular junction. Each nAchR subunit confers differential attributes to channel properties, including activation, deactivation and desensitization kinetics, pH sensitivity, cation permeability, and binding to allosteric modulators. CHRNA7 forms homopentameric neuronal acetylcholine receptors abundantly expressed in the central nervous system, characterized by fast desensitization and high calcium permeability. Also forms heteropentamers with CHRNB2, mainly expressed in basal forebrain cholinergic neurons. Involved in the modulation of calcium-dependent signaling pathways and influences the release of neurotransmitters, including dopamine, glutamate and GABA. Also expressed in non-neuronal cells such as immune cells like lymphocytes, monocytes and macrophages. In T cells, activation induces metabotropic signaling that results in an increase of intracellular Ca2+ concentrations, independent of ionotropic receptor functions. In macrophages, required for acetylcholine-mediated inhibition of TNF and other inflammatory cytokine release. Once activated by acetylcholine, nicotine or other agonists, selectively inhibits production of pro-inflammatory cytokines while leaving anti-inflammatory cytokines undisturbed. Stimulates the cholinergic anti-inflammatory pathway, controlling inflammation by inhibiting NFKB nuclear translocation and activating the JAK2-STAT3 pathway, independently of ion channel activity. Also expressed in the urothelium where it modulates reflex bladder activity by increasing intracellular calcium through internal stores and decreasing basal ATP release. The polypeptide is Neuronal acetylcholine receptor subunit alpha-7 (Chrna7) (Rattus norvegicus (Rat)).